Consider the following 410-residue polypeptide: Acetyltransferase aurG (410 aa).

Helical transmembrane passes span 3 to 23 (LWLV…VVCF), 28 to 48 (SLVR…GLIL), and 59 to 79 (WSLV…VGLI). A compositionally biased stretch (polar residues) spans 90 to 99 (TSSRGGQPNA). A disordered region spans residues 90–112 (TSSRGGQPNASLDLAGRKKPPSS). N-linked (GlcNAc...) asparagine glycosylation is present at N98. A run of 4 helical transmembrane segments spans residues 157–177 (AMTL…GGDL), 219–239 (MYFS…MVGL), 300–320 (ILAT…YSYG), and 364–384 (IGYV…FFPL).

It belongs to the wax synthase family.

It localises to the membrane. The protein operates within polyketide biosynthesis. In terms of biological role, acetyltransferase; part of the gene cluster that mediates the biosynthesis of aurovertins, fungal polyketides that exhibit potent inhibition of adenosine triphosphate synthase. Tha biosynthesis starts with the HR-PKS aurA that selects propionate as the starter unit; synthesizes a hexa-ene chain through the repeated functions of the KR and DH domains in the first six iterations; selectively introduces three alpha-methyl substitutions at C4, C6, and C16 using the S-adensylmethionine-dependent cMET; and shuts off KR and DH in the last three iterations to afford a 1,3,5-triketo portion that can undergo intramolecular cyclization to yield the alpha-pyrone intermediate. AurE may act as a cyclase and enhances the rate of pyrone formation and product release of aurA. The methyltransferase aurB then methylates the C17 hydroxyl group. C17 methylation is required to initiate epoxidation by the downstream monooxygenase aurC. The monooxygenase aurC and the epoxide hydrolase aurD can iteratively transform the terminal triene portion of the methylated precursor into the dioxabicyclo[3.2.1]octane scaffold of aurovertin E. Epoxidation modifications of the precursor occur in two separate steps; bis-epoxidation of the two terminal olefins takes place first, followed by another epoxidation that occurs at C7-C8 after tetrahydrofuran formation. The O-acyltransferase aurG converts aurovertin E to aurovertin A. This Calcarisporium arbuscula (Dendryphion arbuscula) protein is Acetyltransferase aurG.